The following is a 74-amino-acid chain: Invertase 3 (74 aa).

Residues 1–19 (MLLQAFIFLLAGFAAKISA) form the signal peptide. N-linked (GlcNAc...) asparagine glycosylation is present at asparagine 23. Substrate is bound by residues 39-42 (WMND) and glutamine 60. Aspartate 42 is an active-site residue. Asparagine 64 is a glycosylation site (N-linked (GlcNAc...) asparagine).

This sequence belongs to the glycosyl hydrolase 32 family.

The catalysed reaction is Hydrolysis of terminal non-reducing beta-D-fructofuranoside residues in beta-D-fructofuranosides.. The chain is Invertase 3 (SUC3) from Saccharomyces cerevisiae (Baker's yeast).